A 367-amino-acid chain; its full sequence is Female-specific protein transformer (367 aa).

A disordered region spans residues 86-280 (ESISSKKIKS…HRHHRSQERS (195 aa)). Residues 109–129 (VKQNSPDVTQKFTKKYGSSEN) show a composition bias toward polar residues. Residues 130–144 (PDFRRHSSYEKDNYH) are compositionally biased toward basic and acidic residues. Residues 195-223 (NRRRSSHRSRRGSGSPRSRRYTSRHRRRS) show a composition bias toward basic residues. Residues 229–238 (TSWKHNPEHR) are compositionally biased toward basic and acidic residues. Basic residues predominate over residues 239-257 (TSRRSRTRSPRGNRSRRRS).

Its function is as follows. Sex differentiation protein controlling female somatic sexual differentiation. May act by promoting the formation of a splicing enhancer complex. This Musca domestica (House fly) protein is Female-specific protein transformer.